The sequence spans 348 residues: D-alanine--D-alanine ligase (348 aa).

The ATP-grasp domain occupies 136 to 344 (KSVFKSYNLP…LEKLVANLIE (209 aa)). Position 171–226 (171–226 (NKIISYPCFIKPANLGSSVGITKAYSKEEFIAGIEFAAKYDERIIVEKSIEGRELE)) interacts with ATP. Residues Asp297, Glu311, and Asn313 each coordinate Mg(2+).

This sequence belongs to the D-alanine--D-alanine ligase family. Mg(2+) serves as cofactor. The cofactor is Mn(2+).

Its subcellular location is the cytoplasm. The enzyme catalyses 2 D-alanine + ATP = D-alanyl-D-alanine + ADP + phosphate + H(+). Its pathway is cell wall biogenesis; peptidoglycan biosynthesis. In terms of biological role, cell wall formation. The sequence is that of D-alanine--D-alanine ligase from Prochlorococcus marinus (strain NATL2A).